A 203-amino-acid chain; its full sequence is GTP cyclohydrolase 1 (203 aa).

Zn(2+) contacts are provided by C87, H90, and C158.

The protein belongs to the GTP cyclohydrolase I family. Homomer.

The enzyme catalyses GTP + H2O = 7,8-dihydroneopterin 3'-triphosphate + formate + H(+). The protein operates within cofactor biosynthesis; 7,8-dihydroneopterin triphosphate biosynthesis; 7,8-dihydroneopterin triphosphate from GTP: step 1/1. This is GTP cyclohydrolase 1 from Xylella fastidiosa (strain M23).